The following is a 510-amino-acid chain: Glutamate--tRNA ligase (510 aa).

The short motif at 15 to 25 (PSPTGDPHVGT) is the 'HIGH' region element. The 'KMSKS' region signature appears at 256–260 (KISKR). Lys259 lines the ATP pocket.

It belongs to the class-I aminoacyl-tRNA synthetase family. Glutamate--tRNA ligase type 1 subfamily. Monomer.

It is found in the cytoplasm. It carries out the reaction tRNA(Glu) + L-glutamate + ATP = L-glutamyl-tRNA(Glu) + AMP + diphosphate. Catalyzes the attachment of glutamate to tRNA(Glu) in a two-step reaction: glutamate is first activated by ATP to form Glu-AMP and then transferred to the acceptor end of tRNA(Glu). The sequence is that of Glutamate--tRNA ligase from Fusobacterium nucleatum subsp. nucleatum (strain ATCC 25586 / DSM 15643 / BCRC 10681 / CIP 101130 / JCM 8532 / KCTC 2640 / LMG 13131 / VPI 4355).